The primary structure comprises 102 residues: Large ribosomal subunit protein P1 (102 aa).

Residues A69–T91 form a disordered region. Positions A74–D90 are enriched in basic and acidic residues.

Belongs to the eukaryotic ribosomal protein P1/P2 family. As to quaternary structure, part of the 50S ribosomal subunit. Homodimer, it forms part of the ribosomal stalk which helps the ribosome interact with GTP-bound translation factors. Forms a heptameric uL10/P0(P1)2(P1)2(P1)2 complex, where uL10/P0 forms an elongated spine to which the P1 dimers bind in a sequential fashion.

Functionally, forms part of the ribosomal stalk, playing a central role in the interaction of the ribosome with GTP-bound translation factors. The polypeptide is Large ribosomal subunit protein P1 (Methanocaldococcus jannaschii (strain ATCC 43067 / DSM 2661 / JAL-1 / JCM 10045 / NBRC 100440) (Methanococcus jannaschii)).